The sequence spans 711 residues: Taperin (711 aa).

Disordered regions lie at residues 134 to 305 (SRLL…APKP), 328 to 384 (RNSF…LGKS), and 414 to 438 (QRPSSPPPFLPAASEEAEPAEGLRV). A compositionally biased stretch (pro residues) spans 157-180 (PPPPPPPPAPPRPPPAAPSPPAAP). The span at 197 to 206 (LQKTGSNSFT) shows a compositional bias: polar residues. A Phosphoserine modification is found at S241. Residues 267–282 (TPSATPASPPASATPS) show a composition bias toward low complexity. A compositionally biased stretch (polar residues) spans 283–296 (QRQCVSAATSTNDS). Phosphoserine is present on residues S362, S418, and S463. Disordered regions lie at residues 500–535 (TFTVVPKRKPGTLQDQHFSQANREPRPREAEEEEAS), 572–630 (SRKK…EKPF), 642–662 (SVRPESSRLPEGSSGLSSYTP), and 674–711 (QALEQAPREAEPPPVEAMLTPASQNDLSDFRSEPALYF). Composition is skewed to polar residues over residues 512–521 (LQDQHFSQAN) and 581–590 (NDKSLQTTFE). Residues 597-624 (LEQEEEVDQQEEEEEEEEEEEEEEEGSG) are compositionally biased toward acidic residues.

Belongs to the taperin family. In terms of assembly, interacts with GRXCR2; the interaction restricts TPRN to the stereocilum basal region. Interacts with actin ACTB; the interaction may stabilize stereocilia. Interacts with CLIC5. Interacts with PTPRQ. TPRN, CLIC5 and PTPQR form concentric rings at the base of stereocilia and may form a complex. Interacts with phosphatase PPP1CA; the interaction results in inhibition of PPC1A phosphatase activity. Interacts with DNA damage response proteins XRCC6/KU70, XRCC5/KU80, PARP1, TOP1 and TOP2A; these interactions recruit TPRN to sites of DNA damage where it may play a role in DNA repair. Expression is detected in fetal cochlea.

It is found in the cell projection. The protein resides in the stereocilium. It localises to the microvillus. The protein localises to the nucleus. Its subcellular location is the nucleoplasm. It is found in the cytoplasm. Essential for hearing. Required for maintenance of stereocilia on both inner and outer hair cells. Necessary for the integrity of the stereociliary rootlet. May act as an actin cytoskeleton regulator involved in the regulation of actin dynamics at the pointed end in hair cells. Forms rings at the base of stereocilia and binds actin filaments in the stereocilia which may stabilize the stereocilia. Acts as a strong inhibitor of PPP1CA phosphatase activity. Recruited to sites of DNA damage and may play a role in DNA damage repair. This is Taperin (TPRN) from Homo sapiens (Human).